Reading from the N-terminus, the 1139-residue chain is MSRRFTVTSLPPAGPARSPDPESRRHSVADPRHLPGEDVKGDGNPKESSPFINSTDTEKGKEYDGKNMALFEEEMDTSPMVSSLLSGLANYTNLPQGSREHEEAENNEGGKKKPVQAPRMGTFMGVYLPCLQNIFGVILFLRLTWVVGIAGIMESFCMVFICCSCTMLTAISMSAIATNGVVPAGGSYYMISRSLGPEFGGAVGLCFYLGTTFAGAMYILGTIEILLAYLFPAMAIFKAEDASGEAAAMLNNMRVYGTCVLTCMATVVFVGVKYVNKFALVFLGCVILSILAIYAGVIKSAFDPPNFPICLLGNRTLSRHGFDVCAKLAWEGNETVTTRLWGLFCSSRFLNATCDEYFTRNNVTEIQGIPGAASGLIKENLWSSYLTKGVIVERSGMTSVGLADGTPIDMDHPYVFSDMTSYFTLLVGIYFPSVTGIMAGSNRSGDLRDAQKSIPTGTILAIATTSAVYISSVVLFGACIEGVVLRDKFGEAVNGNLVVGTLAWPSPWVIVIGSFFSTCGAGLQSLTGAPRLLQAISRDGIVPFLQVFGHGKANGEPTWALLLTACICEIGILIASLDEVAPILSMFFLMCYMFVNLACAVQTLLRTPNWRPRFRYYHWTLSFLGMSLCLALMFICSWYYALVAMLIAGLIYKYIEYRGAEKEWGDGIRGLSLSAARYALLRLEEGPPHTKNWRPQLLVLVRVDQDQNVVHPQLLSLTSQLKAGKGLTIVGSVLEGTFLENHPQAQRAEESIRRLMEAEKVKGFCQVVISSNLRDGVSHLIQSGGLGGLQHNTVLVGWPRNWRQKEDHQTWRNFIELVRETTAGHLALLVTKNVSMFPGNPERFSEGSIDVWWIVHDGGMLMLLPFLLRHHKVWRKCKMRIFTVAQMDDNSIQMKKDLTTFLYHLRITAEVEVVEMHESDISAYTYEKTLVMEQRSQILKQMHLTKNEREREIQSITDESRGSIRRKNPANTRLRLNVPEETAGDSEEKPEEEVQLIHDQSAPSCPSSSPSPGEEPEGEGETDPEKVHLTWTKDKSVAEKNKGPSPVSSEGIKDFFSMKPEWENLNQSNVRRMHTAVRLNEVIVKKSRDAKLVLLNMPGPPRNRNGDENYMEFLEVLTEHLDRVMLVRGGGREVITIYS.

Disordered stretches follow at residues methionine 1–tyrosine 63 and threonine 92–glutamine 116. Residues methionine 1–serine 98 are Cytoplasmic-facing. Residues proline 19 to proline 45 are compositionally biased toward basic and acidic residues. The segment covering lysine 46–threonine 55 has biased composition (polar residues). At threonine 57 the chain carries Phosphothreonine. The segment covering serine 98–lysine 111 has biased composition (basic and acidic residues). A discontinuously helical transmembrane segment spans residues arginine 99–methionine 120. Lysine 113 contributes to the K(+) binding site. The Extracellular portion of the chain corresponds to glycine 121–proline 129. Residues cysteine 130–glycine 151 form a helical membrane-spanning segment. The Cytoplasmic portion of the chain corresponds to isoleucine 152–serine 174. Residues alanine 175–valine 203 traverse the membrane as a helical segment. Alanine 184 is a chloride binding site. The Extracellular portion of the chain corresponds to glycine 204–tyrosine 229. Helical transmembrane passes span leucine 230–leucine 250 and asparagine 251–asparagine 276. The Extracellular segment spans residues lysine 277 to leucine 402. Residues cysteine 310 and cysteine 325 are joined by a disulfide bond. N-linked (GlcNAc...) asparagine glycans are attached at residues asparagine 314, asparagine 333, asparagine 351, and asparagine 362. Residues cysteine 345 and cysteine 354 are joined by a disulfide bond. Residues alanine 403–threonine 420 traverse the membrane as a helical segment. Methionine 410 contributes to the K(+) binding site. Residues tyrosine 414 and valine 415 each coordinate chloride. Topologically, residues serine 421–isoleucine 429 are cytoplasmic. The chain crosses the membrane as a helical span at residues tyrosine 430–serine 453. K(+) is bound at residue aspartate 446. Topologically, residues isoleucine 454–leucine 485 are extracellular. Residues arginine 486 to glycine 513 traverse the membrane as a helical segment. The Cytoplasmic portion of the chain corresponds to serine 514 to glutamine 534. Transmembrane regions (helical) follow at residues alanine 535–glycine 555 and glutamate 556–aspartate 578. Residue glutamate 569 participates in chloride binding. At glutamate 579 to tyrosine 592 the chain is on the cytoplasmic side. The next 2 membrane-spanning stretches (helical) occupy residues methionine 593 to arginine 615 and tyrosine 616 to leucine 632. Topologically, residues methionine 633–serine 1139 are cytoplasmic. The scissor helix stretch occupies residues glycine 667 to leucine 681. At threonine 929 the chain carries Phosphothreonine; by OXSR1 and STK39. The tract at residues methionine 942 to isoleucine 1052 is disordered. Residues threonine 945–glycine 962 show a composition bias toward basic and acidic residues. Over residues threonine 982 to valine 994 the composition is skewed to acidic residues. Positions proline 1003–proline 1012 are enriched in low complexity. Over residues aspartate 1023–lysine 1042 the composition is skewed to basic and acidic residues. Phosphothreonine; by OXSR1 and STK39 is present on threonine 1030. Phosphoserine is present on residues serine 1045, serine 1048, and serine 1049.

It belongs to the SLC12A transporter family. K/Cl co-transporter subfamily. As to quaternary structure, homodimer; adopts a domain-swap conformation at the scissor helices connecting the transmembrane domain and C-terminal domain. Heterodimer with K-Cl cotransporters SLC12A6 and SLC12A7. Interacts with AP2A1. Post-translationally, phosphorylated at Thr-929 and Thr-1030 by OXSR1/OSR1 and STK39/SPAK downstream of WNK kinases (WNK1, WNK2, WNK3 or WNK4), inhibiting the potassium-chloride cotransport activity. In terms of tissue distribution, brain specific. Detected in neuronal cells.

The protein localises to the cell membrane. The protein resides in the cell projection. It localises to the dendrite. It catalyses the reaction K(+)(in) + chloride(in) = K(+)(out) + chloride(out). With respect to regulation, inhibited following phosphorylation by OXSR1/OSR1 and STK39/SPAK: phosphorylation takes place downstream of WNK kinases (WNK1, WNK2, WNK3 or WNK4) in response to hyperosmotic stress and subsequent cell shrinkage. Functionally, mediates electroneutral potassium-chloride cotransport in mature neurons and is required for neuronal Cl(-) homeostasis. As major extruder of intracellular chloride, it establishes the low neuronal Cl(-) levels required for chloride influx after binding of GABA-A and glycine to their receptors, with subsequent hyperpolarization and neuronal inhibition. Involved in the regulation of dendritic spine formation and maturation. This is Solute carrier family 12 member 5 from Homo sapiens (Human).